The chain runs to 27 residues: uncharacterized protein (27 aa).

Residues 6 to 26 (IIVLGALIALLELIRFLLQLL) traverse the membrane as a helical segment.

Belongs to the DinQ family.

The protein localises to the cell inner membrane. This is an uncharacterized protein from Escherichia coli (strain K12).